We begin with the raw amino-acid sequence, 246 residues long: MQWIDEGLVIGLRKHGETGVVLELMTLEHGRHLGLVHGGRSRRMQPMLQPGNTLRATWRARLDGALGSYAVEPLTLNASRLMDSGLALYGIGHLSTLLRLLPERDPHPALYEAAQVLIAHLDEPEIAPALMVRFELALLAGLGFGLDLSHCAATGANDALVYVSPKSGRAVSASAGEPFRDRLLALPPFLRDRDQPGSGWRTPDAHDVREGFTLTGYFLDQHVWRPRAQDTPEERARFVALGTGQR.

It belongs to the RecO family.

Its function is as follows. Involved in DNA repair and RecF pathway recombination. The protein is DNA repair protein RecO of Methylorubrum populi (strain ATCC BAA-705 / NCIMB 13946 / BJ001) (Methylobacterium populi).